We begin with the raw amino-acid sequence, 555 residues long: Transmembrane protein 87A (555 aa).

A signal peptide spans 1–21 (MAAAAWLQVLPVILLLLGAHP). Residues 22 to 225 (SPLSFFSAGP…YEYLTLEDYP (204 aa)) lie on the Lumenal side of the membrane. 2 disulfide bridges follow: C74-C128 and C89-C431. N-linked (GlcNAc...) asparagine glycans are attached at residues N79, N127, N157, and N160. Residues 226-246 (LMIFFMVMCIVYVLFGVLWLA) traverse the membrane as a helical segment. The Cytoplasmic segment spans residues 247–257 (WSACYWRDLLR). The chain crosses the membrane as a helical span at residues 258-278 (IQFWIGAVIFLGMLEKAVFYA). Residues 279-305 (EFQNIRYKGESVQGALILAELLSAVKR) are Lumenal-facing. Residues 306–322 (SLARTLVIIVSLGYGIV) traverse the membrane as a helical segment. The Cytoplasmic segment spans residues 323–325 (KPR). A helical transmembrane segment spans residues 326 to 346 (LGVTLHKVVVAGALYLLFSGM). Topologically, residues 347 to 361 (EGVLRVTGAQTDLAS) are lumenal. Residues 362–382 (LAFIPLAFLDTALCWWIFISL) traverse the membrane as a helical segment. Topologically, residues 383-403 (TQTMKLLKLRRNIVKLSLYRH) are cytoplasmic. The helical transmembrane segment at 404–424 (FTNTLILAVAASIVFIIWTTM) threads the bilayer. The Lumenal segment spans residues 425-437 (KFRIVTCQSDWRE). The helical transmembrane segment at 438-458 (LWVDDAIWRLLFSMILFVIMV) threads the bilayer. Over 459-555 (LWRPSANNQR…ITHFERSKME (97 aa)) the chain is Cytoplasmic. The interval 473–516 (PLSEEEEEDEQKEPMLKESFEGMKMRSTKQEPNGNSKVNKAQED) is disordered. Positions 484–496 (KEPMLKESFEGMK) are enriched in basic and acidic residues. Residues 502–511 (QEPNGNSKVN) show a composition bias toward polar residues. The residue at position 540 (S540) is a Phosphoserine.

Belongs to the LU7TM family. TMEM87 subfamily. May interact with STOML3; STOML3 potentiates the mechanosensitive ion channel activity associated with TMEM87A.

It is found in the cell membrane. The protein resides in the golgi apparatus membrane. Its subcellular location is the cell projection. It localises to the ruffle. Its function is as follows. Potential monoatomic ion channel gated by mechanical force, implicated in normal touch sensitivity through the generation of mechanically activated currents. However, a direct channel activity is debated and an alternative could be that it functions as a chaperone for an unidentified mechanosensitive ion channel. Could also be involved in cell mechanosensitivity regulating cell adhesion and migration. May also be involved in retrograde transport from endosomes to the trans-Golgi network (TGN). This is Transmembrane protein 87A from Homo sapiens (Human).